The chain runs to 90 residues: Mitochondrial import inner membrane translocase subunit Tim10 (90 aa).

The short motif at Cys-29 to Cys-54 is the Twin CX3C motif element. 2 cysteine pairs are disulfide-bonded: Cys-29–Cys-54 and Cys-33–Cys-50.

The protein belongs to the small Tim family. In terms of assembly, heterohexamer; composed of 3 copies of TIMM9 and 3 copies of TIMM10/TIM10A, named soluble 70 kDa complex. The complex forms a 6-bladed alpha-propeller structure and associates with the TIMM22 component of the TIM22 complex. Interacts with multi-pass transmembrane proteins in transit. Also forms a complex composed of TIMM9, TIMM10/TIM10A and FXC1/TIM10B.

It localises to the mitochondrion inner membrane. Mitochondrial intermembrane chaperone that participates in the import and insertion of multi-pass transmembrane proteins into the mitochondrial inner membrane. May also be required for the transfer of beta-barrel precursors from the TOM complex to the sorting and assembly machinery (SAM complex) of the outer membrane. Acts as a chaperone-like protein that protects the hydrophobic precursors from aggregation and guide them through the mitochondrial intermembrane space. This chain is Mitochondrial import inner membrane translocase subunit Tim10 (Timm10), found in Rattus norvegicus (Rat).